A 620-amino-acid polypeptide reads, in one-letter code: Protein CNGC15b (620 aa).

6 helical membrane passes run 73 to 93 (IFLV…YLPI), 102 to 122 (IGIA…VFYV), 161 to 181 (GFFL…WIVI), 198 to 218 (FIII…SSQI), 237 to 257 (LMLY…LSIE), and 356 to 376 (GEIM…ALLI). 462–559 (LFDAMDERML…SSTRTVKAIS (98 aa)) is a binding site for a nucleoside 3',5'-cyclic phosphate.

This sequence belongs to the cyclic nucleotide-gated cation channel (TC 1.A.1.5) family. In terms of assembly, interacts (via N-terminus) with DMI1 (via c-terminus). The Nod factor has no effect on this interaction, implying that the complex is maintained after activation. As to expression, expressed in roots, stems, leaves, flowers and pods.

It localises to the nucleus membrane. Cyclic nucleotide-gated channel involved in the establishment of both rhizobial and mycorrhizal associations. Required for full activation of nuclear-localized Ca(2+) oscillations by Nod and Myc factors. Simultaneous activation of the K(+)-permeable channel DMI1 and the Ca(2+) channel CNGC15 can give rise to sustained Ca(2+) oscillations. May function during fertilization in both female and male gametophytic Ca(2+) signaling. The chain is Protein CNGC15b from Medicago truncatula (Barrel medic).